The chain runs to 162 residues: CASP-like protein BLE3 (162 aa).

The Cytoplasmic portion of the chain corresponds to 1–7 (MAKVHRL). A helical transmembrane segment spans residues 8–28 (MNAVLRLAAAAAAATAAVVMV). Topologically, residues 29 to 50 (TSRETTSFFGIQMEAKYSYTPS) are extracellular. Residues 51 to 71 (FIFFVVAYAVAAAYSLLVLAV) form a helical membrane-spanning segment. Over 72–85 (PAGSALSRLALTTD) the chain is Cytoplasmic. A helical membrane pass occupies residues 86-106 (VVLGMVLAGAVASAGAISDIA). Topologically, residues 107-128 (KNGNSHAGWLPVCGQIHAYCNH) are extracellular. Residues 129–149 (VMAALIAGFVALAVHFVVVMY) form a helical membrane-spanning segment. Topologically, residues 150 to 162 (SLHIVTDVICPCH) are cytoplasmic.

Belongs to the Casparian strip membrane proteins (CASP) family. Homodimer and heterodimers.

Its subcellular location is the cell membrane. Involved in cell elongation in rice through dual regulation by brassinolide and auxin. In Oryza sativa subsp. indica (Rice), this protein is CASP-like protein BLE3 (BLE3).